The primary structure comprises 28 residues: ICPRILMPCSSDSDCLAECICLENGFCG.

Cystine bridges form between Cys-2–Cys-19, Cys-9–Cys-21, and Cys-15–Cys-27.

It belongs to the protease inhibitor I7 (squash-type serine protease inhibitor) family.

Its subcellular location is the secreted. Its function is as follows. Inhibits trypsin. The sequence is that of Trypsin inhibitor 4 from Luffa aegyptiaca (Sponge gourd).